A 364-amino-acid polypeptide reads, in one-letter code: Developmentally-regulated GTP-binding protein 2 (364 aa).

Lysine 21 bears the (3S)-3-hydroxylysine mark. The OBG-type G domain occupies 63 to 288 (ARVALIGFPS…LLEMLWEYLA (226 aa)). GTP-binding positions include 69-76 (GFPSVGKS), 94-98 (FTTLT), 115-118 (DLPG), 246-249 (NKID), and 269-271 (SCG). 2 residues coordinate Mg(2+): serine 76 and threonine 96. The region spanning 288 to 363 (ALTCIYTKKR…EHEDVIQIVK (76 aa)) is the TGS domain.

It belongs to the TRAFAC class OBG-HflX-like GTPase superfamily. OBG GTPase family. Interacts with RWDD1; this interaction confers protection to polyubiquitination and proteolytic degradation. Interacts with JMJD7; this interaction is direct. The cofactor is Mg(2+). Hydroxylated (with S stereochemistry) at C-3 of Lys-21 by JMJD7; this modification hinders trypsin-catalyzed proteolysis in vitro. Post-translationally, polyubiquitinated. As to expression, highest levels in skeletal muscle, heart and kidney. Low levels in colon, thymus, spleen, small intestine, lung and Leukocytes.

It localises to the nucleus. It is found in the cytoplasm. It catalyses the reaction GTP + H2O = GDP + phosphate + H(+). Functionally, catalyzes the conversion of GTP to GDP through hydrolysis of the gamma-phosphate bond in GTP. When hydroxylated at C-3 of 'Lys-21' by JMJD7, may bind to RNA and play a role in translation. The chain is Developmentally-regulated GTP-binding protein 2 from Homo sapiens (Human).